The following is a 184-amino-acid chain: Ribosome maturation factor RimM (184 aa).

A PRC barrel domain is found at 101–180; it reads DGEFFYCDLV…KITTNNAKTL (80 aa).

The protein belongs to the RimM family. As to quaternary structure, binds ribosomal protein uS19.

The protein localises to the cytoplasm. An accessory protein needed during the final step in the assembly of 30S ribosomal subunit, possibly for assembly of the head region. Essential for efficient processing of 16S rRNA. May be needed both before and after RbfA during the maturation of 16S rRNA. It has affinity for free ribosomal 30S subunits but not for 70S ribosomes. The sequence is that of Ribosome maturation factor RimM from Helicobacter pylori (strain Shi470).